The following is a 426-amino-acid chain: Glutamyl-tRNA reductase (426 aa).

Residues 49–52, Ser109, 114–116, and Gln120 contribute to the substrate site; these read TCNR and EGQ. The active-site Nucleophile is Cys50. 189–194 serves as a coordination point for NADP(+); sequence GAGETG.

This sequence belongs to the glutamyl-tRNA reductase family. Homodimer.

The catalysed reaction is (S)-4-amino-5-oxopentanoate + tRNA(Glu) + NADP(+) = L-glutamyl-tRNA(Glu) + NADPH + H(+). Its pathway is porphyrin-containing compound metabolism; protoporphyrin-IX biosynthesis; 5-aminolevulinate from L-glutamyl-tRNA(Glu): step 1/2. It participates in porphyrin-containing compound metabolism; chlorophyll biosynthesis. Functionally, catalyzes the NADPH-dependent reduction of glutamyl-tRNA(Glu) to glutamate 1-semialdehyde (GSA). This is Glutamyl-tRNA reductase from Prosthecochloris aestuarii (strain DSM 271 / SK 413).